The primary structure comprises 82 residues: uncharacterized protein (82 aa).

Transmembrane regions (helical) follow at residues 8 to 28 (LLSA…LPAP) and 50 to 70 (LYTV…YLVL).

It is found in the cell membrane. This is an uncharacterized protein from Klebsiella pneumoniae.